The sequence spans 467 residues: MNMKKATIAATAGIAVTAFAAPTIASASTVVVEAGDTLWGIAQSKGTTVDAIKKANNLTTDKIVPGQKLQVNEVATEEKAEKSVSATWLNVRSGAGVDHSILTSIKGGTKVTVETTESNGWHKITYNDGKTGYVNGKYLTDKATSTPVVKQEVKKETTQQVKPATEAKTEVKQPTTQQTAPAPKAAETKEAPVVDQNATTHNVKSGDTIWALSVKYGVSVQDIMSWNNLSSSSIYVGQKLAIKQPTKTVAPKAETKTQAPAAEKQTAPAVKENSNANTATTEKKETATEQQTTTKAPTQAAKPAPAPSTNTNKTNTTNNNTNASTPSKNTNTNTNTNTNTNTNQGSTNNASASALIAEAQKHLGKAYSWGGNGPTTFDCSGFTKYVFAKSGISLPRTSGAQYASTTRISESQAKPGDLVFFDYGSGISHVGIYVGNGQMINAQDNGVKYDNIHGAGWGKFLVGFGRV.

The first 27 residues, 1–27 (MNMKKATIAATAGIAVTAFAAPTIASA), serve as a signal peptide directing secretion. The LysM 1 domain occupies 28 to 71 (STVVVEAGDTLWGIAQSKGTTVDAIKKANNLTTDKIVPGQKLQV). The SH3b domain maps to 79–143 (KAEKSVSATW…VNGKYLTDKA (65 aa)). Disordered stretches follow at residues 154–199 (KKET…QNAT) and 247–348 (KTVA…GSTN). Over residues 172-185 (KQPTTQQTAPAPKA) the composition is skewed to low complexity. The LysM 2 domain maps to 199–242 (TTHNVKSGDTIWALSVKYGVSVQDIMSWNNLSSSSIYVGQKLAI). Positions 288-348 (TEQQTTTKAP…NTNTNQGSTN (61 aa)) are enriched in low complexity. The segment at 330-343 (TNTNTNTNTNTNTN) is 7 X 2 AA tandem repeats of T-N. The region spanning 349–467 (NASASALIAE…GKFLVGFGRV (119 aa)) is the NlpC/P60 domain. Catalysis depends on Cys-379, which acts as the Nucleophile. The Proton acceptor role is filled by His-429. Residue Asn-441 is part of the active site.

Belongs to the peptidase C40 family.

Its function is as follows. This major extracellular protein may be involved in the invasion of non-professional phagocytic cells by Listeria. The polypeptide is Probable endopeptidase p60 (iap) (Listeria innocua serovar 6a (strain ATCC BAA-680 / CLIP 11262)).